The sequence spans 258 residues: Probable pectin methylesterase CGR3 (258 aa).

The Cytoplasmic portion of the chain corresponds to Met-1 to Pro-29. A helical membrane pass occupies residues Leu-30 to Gly-50. At Pro-51 to His-258 the chain is on the lumenal side. A glycan (N-linked (GlcNAc...) asparagine) is linked at Asn-171.

This sequence belongs to the class I-like SAM-binding methyltransferase superfamily.

Its subcellular location is the golgi apparatus membrane. Its function is as follows. Together with CGR2, required for homogalacturonan pectins (HG) methylesterification in the Golgi apparatus prior to integration into cell walls, essential for general growth and development. Promotes petiole elongation. Impacts photosynthesis and respiration efficiency by influencing leaf mesophyll morphology and physiology; pectin methylesterification modulates both expansion and positioning of cells in leaves, probably by changing cell walls plasticity. This chain is Probable pectin methylesterase CGR3, found in Arabidopsis thaliana (Mouse-ear cress).